A 412-amino-acid chain; its full sequence is Putative oxidoreductase bli-4, mitochondrial (412 aa).

The N-terminal 55 residues, 1–55, are a transit peptide targeting the mitochondrion; it reads MSTKLCQRIARTATLSPTSLVPRSSRLIPIVSSAAVRPSSAIPTRRPFSTTESRY. NADP(+) is bound by residues Ile-108, Asn-120, Asn-186, Tyr-269, Lys-273, Val-308, Thr-310, and Gln-312. Residue Tyr-269 is the Proton donor of the active site. Catalysis depends on Lys-273, which acts as the Lowers pKa of active site Tyr.

This sequence belongs to the short-chain dehydrogenases/reductases (SDR) family.

It localises to the mitochondrion. In terms of biological role, may play a role as an NAD-dependent dehydrogenase in the mitochondria. This is Putative oxidoreductase bli-4, mitochondrial (bli-4) from Neurospora crassa (strain ATCC 24698 / 74-OR23-1A / CBS 708.71 / DSM 1257 / FGSC 987).